Here is a 273-residue protein sequence, read N- to C-terminus: Large ribosomal subunit protein uL2 (273 aa).

Residues 228–273 (VDHPHGGGEGKTSGGRHPVTPWGFSTKGKKTRKNKRTSKFIVKKRK) form a disordered region. The span at 254–273 (KGKKTRKNKRTSKFIVKKRK) shows a compositional bias: basic residues.

The protein belongs to the universal ribosomal protein uL2 family. Part of the 50S ribosomal subunit. Forms a bridge to the 30S subunit in the 70S ribosome.

In terms of biological role, one of the primary rRNA binding proteins. Required for association of the 30S and 50S subunits to form the 70S ribosome, for tRNA binding and peptide bond formation. It has been suggested to have peptidyltransferase activity; this is somewhat controversial. Makes several contacts with the 16S rRNA in the 70S ribosome. The protein is Large ribosomal subunit protein uL2 of Rickettsia prowazekii (strain Madrid E).